A 113-amino-acid polypeptide reads, in one-letter code: Hydrogenase maturation factor HypA (113 aa).

Histidine 2 is a Ni(2+) binding site. Residues cysteine 70, cysteine 73, cysteine 86, and cysteine 88 each coordinate Zn(2+).

It belongs to the HypA/HybF family.

Involved in the maturation of [NiFe] hydrogenases. Required for nickel insertion into the metal center of the hydrogenase. In Nostoc punctiforme (strain ATCC 29133 / PCC 73102), this protein is Hydrogenase maturation factor HypA.